We begin with the raw amino-acid sequence, 262 residues long: Catechol O-methyltransferase domain-containing protein 1 (262 aa).

A helical; Signal-anchor for type II membrane protein transmembrane segment spans residues alanine 12–glycine 32. Residues aspartate 108, glycine 110–threonine 111, serine 116, glutamate 134, valine 135, alanine 163, aspartate 185, aspartate 187, and tyrosine 194 contribute to the S-adenosyl-L-methionine site.

The protein belongs to the class I-like SAM-binding methyltransferase superfamily. Cation-dependent O-methyltransferase family. As to quaternary structure, homodimer.

It localises to the membrane. Putative O-methyltransferase. The polypeptide is Catechol O-methyltransferase domain-containing protein 1 (Comtd1) (Mus musculus (Mouse)).